A 111-amino-acid polypeptide reads, in one-letter code: Cytochrome c (111 aa).

S1 carries the N-acetylserine modification. Residues C22, C25, and H26 each coordinate heme c. K80 is modified (N6,N6,N6-trimethyllysine). Residue M88 participates in heme c binding.

This sequence belongs to the cytochrome c family. Post-translationally, binds 1 heme c group covalently per subunit.

Its subcellular location is the mitochondrion intermembrane space. Functionally, electron carrier protein. The oxidized form of the cytochrome c heme group can accept an electron from the heme group of the cytochrome c1 subunit of cytochrome reductase. Cytochrome c then transfers this electron to the cytochrome oxidase complex, the final protein carrier in the mitochondrial electron-transport chain. The polypeptide is Cytochrome c (Ulva intestinalis (Hollow green nori)).